The following is a 232-amino-acid chain: Thrombin-like enzyme bothrombin (232 aa).

The 223-residue stretch at 1-223 (VIGGDECDIN…YLPWIQSIIA (223 aa)) folds into the Peptidase S1 domain. 6 disulfide bridges follow: cysteine 7–cysteine 139, cysteine 26–cysteine 42, cysteine 74–cysteine 230, cysteine 118–cysteine 184, cysteine 150–cysteine 163, and cysteine 174–cysteine 199. Residues histidine 41 and aspartate 86 each act as charge relay system in the active site. 2 N-linked (GlcNAc...) asparagine glycosylation sites follow: asparagine 98 and asparagine 146. Catalysis depends on serine 178, which acts as the Charge relay system. N-linked (GlcNAc...) asparagine glycosylation occurs at asparagine 225.

The protein belongs to the peptidase S1 family. Snake venom subfamily. In terms of assembly, monomer. As to expression, expressed by the venom gland.

It is found in the secreted. The enzyme catalyses Selective cleavage of Arg-|-Xaa bond in fibrinogen, to form fibrin, and release fibrinopeptide A. The specificity of further degradation of fibrinogen varies with species origin of the enzyme.. Inhibited by diisopropylfluorophosphate (DFP), but not by hirudin. Thrombin-like snake venom serine protease that clots fibrinogen by releasing fibrinopeptide A from the alpha chain of fibrinogen (FGA), induces platelet aggregation through its interaction with GPIb (GP1BA/GP1BB), and activates factor VIII (F8). This chain is Thrombin-like enzyme bothrombin, found in Bothrops jararaca (Jararaca).